A 69-amino-acid chain; its full sequence is Probable Sec-independent protein translocase protein TatE (69 aa).

A helical transmembrane segment spans residues 1 to 21 (MEGISIAKLLVIGALIVLLFG). Residues 45-69 (DDQPAAKSSAQDEHPAAISETRPKE) are disordered. The segment covering 54–69 (AQDEHPAAISETRPKE) has biased composition (basic and acidic residues).

Belongs to the TatA/E family. TatE subfamily.

The protein resides in the cell inner membrane. Part of the twin-arginine translocation (Tat) system that transports large folded proteins containing a characteristic twin-arginine motif in their signal peptide across membranes. TatE shares overlapping functions with TatA. The polypeptide is Probable Sec-independent protein translocase protein TatE (Dickeya chrysanthemi (strain Ech1591) (Dickeya zeae (strain Ech1591))).